The following is a 496-amino-acid chain: Glycerol kinase (496 aa).

Residue T11 participates in ADP binding. ATP contacts are provided by T11, T12, and S13. Residue T11 coordinates sn-glycerol 3-phosphate. ADP is bound at residue R15. Residues R81, E82, Y133, and D242 each coordinate sn-glycerol 3-phosphate. Residues R81, E82, Y133, D242, and Q243 each contribute to the glycerol site. Residues T264 and G307 each coordinate ADP. Residues T264, G307, Q311, and G408 each coordinate ATP. ADP contacts are provided by G408 and N412.

This sequence belongs to the FGGY kinase family.

It carries out the reaction glycerol + ATP = sn-glycerol 3-phosphate + ADP + H(+). It functions in the pathway polyol metabolism; glycerol degradation via glycerol kinase pathway; sn-glycerol 3-phosphate from glycerol: step 1/1. Its activity is regulated as follows. Inhibited by fructose 1,6-bisphosphate (FBP). Key enzyme in the regulation of glycerol uptake and metabolism. Catalyzes the phosphorylation of glycerol to yield sn-glycerol 3-phosphate. In Aromatoleum aromaticum (strain DSM 19018 / LMG 30748 / EbN1) (Azoarcus sp. (strain EbN1)), this protein is Glycerol kinase.